The sequence spans 454 residues: Lipase member H (454 aa).

The first 23 residues, 1–23 (MIYRKIIWGILYVTLMLFDTHRA), serve as a signal peptide directing secretion. N73, N137, and N151 each carry an N-linked (GlcNAc...) asparagine glycan. Residue S161 is the Nucleophile of the active site. D185 acts as the Charge relay system in catalysis. A disulfide bridge links C240 with C253. The active-site Charge relay system is H255. N-linked (GlcNAc...) asparagine glycosylation occurs at N267. 2 disulfides stabilise this stretch: C277-C288 and C291-C299. N358 carries N-linked (GlcNAc...) asparagine glycosylation. The cysteines at positions 430 and 449 are disulfide-linked.

It belongs to the AB hydrolase superfamily. Lipase family.

It localises to the secreted. The protein resides in the cell membrane. The catalysed reaction is 1-hexadecanoyl-2-(9Z-octadecenoyl)-sn-glycero-3-phosphate + H2O = 2-(9Z-octadecenoyl)-sn-glycero-3-phosphate + hexadecanoate + H(+). Hydrolyzes specifically phosphatidic acid (PA) to produce 2-acyl lysophosphatidic acid (LPA; a potent bioactive lipid mediator) and fatty acid. Does not hydrolyze other phospholipids, like phosphatidylserine (PS), phosphatidylcholine (PC) and phosphatidylethanolamine (PE) or triacylglycerol (TG). The polypeptide is Lipase member H (liph) (Danio rerio (Zebrafish)).